Consider the following 357-residue polypeptide: F-box only protein 25 (357 aa).

The segment at 1-83 (MPFLGQDWRS…DTAAHSFYRE (83 aa)) is interaction with beta-actin. The 48-residue stretch at 224–271 (GLTLSDLPLHMLNNILYRFSDGWDIVTLGQVTPTLYMLSEDRRLWKRL) folds into the F-box domain.

Part of a SCF (SKP1-cullin-F-box) protein ligase complex consisting of FBXO25, SKP1, CUL1 and RBX1. Interacts directly with SKP1 and CUL1. Interacts (via C-terminus) with actin (via N-terminus).

It is found in the nucleus. Its pathway is protein modification; protein ubiquitination. Its function is as follows. Substrate-recognition component of the SCF (SKP1-CUL1-F-box protein)-type E3 ubiquitin ligase complex. May play a role in accumulation of expanded polyglutamine (polyQ) protein huntingtin (HTT). The chain is F-box only protein 25 (Fbxo25) from Rattus norvegicus (Rat).